Here is a 276-residue protein sequence, read N- to C-terminus: Ribosomal RNA small subunit methyltransferase A (276 aa).

S-adenosyl-L-methionine-binding residues include Asn27, Leu29, Gly54, Glu75, Asp101, and Asn122.

This sequence belongs to the class I-like SAM-binding methyltransferase superfamily. rRNA adenine N(6)-methyltransferase family. RsmA subfamily.

It localises to the cytoplasm. It catalyses the reaction adenosine(1518)/adenosine(1519) in 16S rRNA + 4 S-adenosyl-L-methionine = N(6)-dimethyladenosine(1518)/N(6)-dimethyladenosine(1519) in 16S rRNA + 4 S-adenosyl-L-homocysteine + 4 H(+). In terms of biological role, specifically dimethylates two adjacent adenosines (A1518 and A1519) in the loop of a conserved hairpin near the 3'-end of 16S rRNA in the 30S particle. May play a critical role in biogenesis of 30S subunits. The sequence is that of Ribosomal RNA small subunit methyltransferase A from Brucella suis (strain ATCC 23445 / NCTC 10510).